A 435-amino-acid chain; its full sequence is MTSFSPREIVSELDRYIVGQRDAKRAVAIALRNRWRRQQLPDALRDEVLPKNILMIGPTGVGKTEISRRLAKLAEAPFLKVEATKFTEVGYVGRDVEQIIRDLVEIALAMTRERKRKDVQAKAHVAAEGRVLDALVGANASEATRESFRRKLRDGELDEKEIEVEVADSGGGMPTFDIPGMPGSQMGMINLSDIMGKAFGGRTKTRRMAVRDSYDVLVAEESDKLLDQEQLTQEAIRSVENNGIVFLDEIDKICARAERQGGDVSREGVQRDLLPLIEGTTVATKHGAVKTDHILFIASGAFHIAKPSDLLPELQGRLPIRVELQALSKDDMRRVLTEPEASLIKQYVALLNTENVTLDFTDDGIDAIADIATSVNSTVENIGARRLHTVMERVLDEVSFAATDKAGETVTIDGAYVRKHLGDLSKNTDLSKFIL.

Residues Val18, 60-65 (GVGKTE), Asp248, Glu313, and Arg385 contribute to the ATP site.

The protein belongs to the ClpX chaperone family. HslU subfamily. A double ring-shaped homohexamer of HslV is capped on each side by a ring-shaped HslU homohexamer. The assembly of the HslU/HslV complex is dependent on binding of ATP.

It is found in the cytoplasm. In terms of biological role, ATPase subunit of a proteasome-like degradation complex; this subunit has chaperone activity. The binding of ATP and its subsequent hydrolysis by HslU are essential for unfolding of protein substrates subsequently hydrolyzed by HslV. HslU recognizes the N-terminal part of its protein substrates and unfolds these before they are guided to HslV for hydrolysis. The sequence is that of ATP-dependent protease ATPase subunit HslU from Parvibaculum lavamentivorans (strain DS-1 / DSM 13023 / NCIMB 13966).